We begin with the raw amino-acid sequence, 688 residues long: UvrABC system protein B (688 aa).

A Helicase ATP-binding domain is found at Gly31–Gln414. Gly44–Ser51 contacts ATP. A Beta-hairpin motif is present at residues Tyr97–Ile120. The 167-residue stretch at Gln434 to Thr600 folds into the Helicase C-terminal domain. Positions Leu614 to Ile633 are disordered. A UVR domain is found at Glu642–Asp677.

This sequence belongs to the UvrB family. As to quaternary structure, forms a heterotetramer with UvrA during the search for lesions. Interacts with UvrC in an incision complex.

Its subcellular location is the cytoplasm. The UvrABC repair system catalyzes the recognition and processing of DNA lesions. A damage recognition complex composed of 2 UvrA and 2 UvrB subunits scans DNA for abnormalities. Upon binding of the UvrA(2)B(2) complex to a putative damaged site, the DNA wraps around one UvrB monomer. DNA wrap is dependent on ATP binding by UvrB and probably causes local melting of the DNA helix, facilitating insertion of UvrB beta-hairpin between the DNA strands. Then UvrB probes one DNA strand for the presence of a lesion. If a lesion is found the UvrA subunits dissociate and the UvrB-DNA preincision complex is formed. This complex is subsequently bound by UvrC and the second UvrB is released. If no lesion is found, the DNA wraps around the other UvrB subunit that will check the other stand for damage. This is UvrABC system protein B from Leifsonia xyli subsp. xyli (strain CTCB07).